Here is a 290-residue protein sequence, read N- to C-terminus: Bifunctional protein FolD (290 aa).

NADP(+) is bound by residues 169-171, Ile194, and Ile235; that span reads GAS.

This sequence belongs to the tetrahydrofolate dehydrogenase/cyclohydrolase family. As to quaternary structure, homodimer.

The catalysed reaction is (6R)-5,10-methylene-5,6,7,8-tetrahydrofolate + NADP(+) = (6R)-5,10-methenyltetrahydrofolate + NADPH. It catalyses the reaction (6R)-5,10-methenyltetrahydrofolate + H2O = (6R)-10-formyltetrahydrofolate + H(+). Its pathway is one-carbon metabolism; tetrahydrofolate interconversion. Its function is as follows. Catalyzes the oxidation of 5,10-methylenetetrahydrofolate to 5,10-methenyltetrahydrofolate and then the hydrolysis of 5,10-methenyltetrahydrofolate to 10-formyltetrahydrofolate. This chain is Bifunctional protein FolD, found in Helicobacter pylori (strain HPAG1).